The chain runs to 124 residues: Small ribosomal subunit protein uS12c (124 aa).

It belongs to the universal ribosomal protein uS12 family. As to quaternary structure, part of the 30S ribosomal subunit.

It is found in the plastid. With S4 and S5 plays an important role in translational accuracy. Located at the interface of the 30S and 50S subunits. The sequence is that of Small ribosomal subunit protein uS12c (rps12) from Helicosporidium sp. subsp. Simulium jonesii (Green alga).